A 347-amino-acid polypeptide reads, in one-letter code: Intracellular hyaluronan-binding protein 4 (347 aa).

2 disordered regions span residues 39 to 221 (GTEK…PSET) and 298 to 347 (FGSL…PALA). Composition is skewed to basic and acidic residues over residues 61 to 71 (VKKESQRDRKT), 83 to 107 (PGHE…DAEK), 116 to 125 (RPVDVLDRPA), and 146 to 174 (DGFD…EKRS). The segment covering 199–213 (EVTENEETQEAVETD) has biased composition (acidic residues). Gly residues predominate over residues 307 to 319 (GGRGGRGGRGRGG). Acidic residues predominate over residues 338–347 (DDPEDFPALA).

The protein belongs to the SERBP1-HABP4 family. As to quaternary structure, associates with ribosomes; promoting ribosome stabilization. Interacts with eef2/eEF2; promoting ribosome stabilization.

The protein resides in the nucleus. It localises to the cytoplasm. Its subcellular location is the stress granule. The protein localises to the nucleolus. It is found in the nucleus speckle. The protein resides in the cajal body. Functionally, ribosome-binding protein that promotes ribosome hibernation, a process during which ribosomes are stabilized in an inactive state and preserved from proteasomal degradation. Acts via its association with eef2/eEF2 factor at the A-site of the ribosome, promoting ribosome stabilization in an inactive state compatible with storage. Plays a key role in ribosome hibernation in the mature egg by promoting ribosome stabilization. Ribosomes, which are produced in large quantities during oogenesis, are stored and translationally repressed in the egg and early embryo. This chain is Intracellular hyaluronan-binding protein 4, found in Danio rerio (Zebrafish).